The sequence spans 494 residues: UDP-N-acetylmuramate--L-alanine ligase (494 aa).

ATP is bound at residue 140-146 (GTHGKTT).

It belongs to the MurCDEF family.

It localises to the cytoplasm. The catalysed reaction is UDP-N-acetyl-alpha-D-muramate + L-alanine + ATP = UDP-N-acetyl-alpha-D-muramoyl-L-alanine + ADP + phosphate + H(+). It functions in the pathway cell wall biogenesis; peptidoglycan biosynthesis. Cell wall formation. The sequence is that of UDP-N-acetylmuramate--L-alanine ligase from Nostoc sp. (strain PCC 7120 / SAG 25.82 / UTEX 2576).